Reading from the N-terminus, the 550-residue chain is Nucleoside hydrolase 4 (550 aa).

Belongs to the IUNH family.

The protein localises to the cytoplasm. In terms of biological role, may be involved in the degradation of nucleosides. This Arabidopsis thaliana (Mouse-ear cress) protein is Nucleoside hydrolase 4.